The chain runs to 545 residues: CTP synthase (545 aa).

The tract at residues 1 to 266 is amidoligase domain; sequence MTTNYIFVTG…DDYICKRFSL (266 aa). Ser14 is a binding site for CTP. A UTP-binding site is contributed by Ser14. ATP contacts are provided by residues 15–20 and Asp72; that span reads SLGKGI. 2 residues coordinate Mg(2+): Asp72 and Glu140. CTP is bound by residues 147–149, 187–192, and Lys223; these read DIE and KTKPTQ. Residues 187 to 192 and Lys223 contribute to the UTP site; that span reads KTKPTQ. Residue 239-241 participates in ATP binding; the sequence is KDV. The Glutamine amidotransferase type-1 domain maps to 291–542; sequence TIGMVGKYIE…VKAASEYQKR (252 aa). L-glutamine is bound at residue Gly352. Cys379 serves as the catalytic Nucleophile; for glutamine hydrolysis. L-glutamine-binding positions include 380–383, Glu403, and Arg470; that span reads LGMQ. Catalysis depends on residues His515 and Glu517.

The protein belongs to the CTP synthase family. Homotetramer.

It carries out the reaction UTP + L-glutamine + ATP + H2O = CTP + L-glutamate + ADP + phosphate + 2 H(+). The catalysed reaction is L-glutamine + H2O = L-glutamate + NH4(+). It catalyses the reaction UTP + NH4(+) + ATP = CTP + ADP + phosphate + 2 H(+). It functions in the pathway pyrimidine metabolism; CTP biosynthesis via de novo pathway; CTP from UDP: step 2/2. Its activity is regulated as follows. Allosterically activated by GTP, when glutamine is the substrate; GTP has no effect on the reaction when ammonia is the substrate. The allosteric effector GTP functions by stabilizing the protein conformation that binds the tetrahedral intermediate(s) formed during glutamine hydrolysis. Inhibited by the product CTP, via allosteric rather than competitive inhibition. Its function is as follows. Catalyzes the ATP-dependent amination of UTP to CTP with either L-glutamine or ammonia as the source of nitrogen. Regulates intracellular CTP levels through interactions with the four ribonucleotide triphosphates. This chain is CTP synthase, found in Citrobacter koseri (strain ATCC BAA-895 / CDC 4225-83 / SGSC4696).